The primary structure comprises 471 residues: UDP-N-acetylmuramate--L-alanine ligase (471 aa).

114–120 (GTHGKTT) contacts ATP.

The protein belongs to the MurCDEF family.

It is found in the cytoplasm. It carries out the reaction UDP-N-acetyl-alpha-D-muramate + L-alanine + ATP = UDP-N-acetyl-alpha-D-muramoyl-L-alanine + ADP + phosphate + H(+). It functions in the pathway cell wall biogenesis; peptidoglycan biosynthesis. Cell wall formation. The sequence is that of UDP-N-acetylmuramate--L-alanine ligase from Rhizobium etli (strain ATCC 51251 / DSM 11541 / JCM 21823 / NBRC 15573 / CFN 42).